We begin with the raw amino-acid sequence, 220 residues long: Vesicle-associated membrane protein 7 (220 aa).

An N-acetylalanine modification is found at Ala2. At 2–188 (AILFAVVARG…ARAMCVKNVK (187 aa)) the chain is on the cytoplasmic side. The Longin domain maps to 7 to 110 (VVARGTTILA…AMNSEFSSVL (104 aa)). Positions 125 to 185 (RVTETQAQVD…RNLARAMCVK (61 aa)) constitute a v-SNARE coiled-coil homology domain. A phosphoserine mark is found at Ser167 and Ser168. Residues 189 to 209 (LTAIIVVVSIVFIYIIVSPLC) traverse the membrane as a helical; Anchor for type IV membrane protein segment. Over 210–220 (GGFTWPSCVKK) the chain is Vesicular.

This sequence belongs to the synaptobrevin family. As to quaternary structure, may interact with STX17. Component of the SNARE complex composed of STX4, SNAP23 and VAMP7 that binds SYT7 during lysosomal exocytosis. Component of the SNARE complex composed of STX7, STX8, VAMP7 and VTI1B that is required for heterotypic fusion of late endosomes with lysosomes. Interacts with PICALM. Interacts with RAB21. In terms of tissue distribution, expressed in brain, kidney, liver, lung, spleen and thymus. Not expressed in heart and skeletal muscle.

The protein localises to the cytoplasmic vesicle. The protein resides in the secretory vesicle membrane. Its subcellular location is the golgi apparatus. It localises to the trans-Golgi network membrane. It is found in the late endosome membrane. The protein localises to the lysosome membrane. The protein resides in the endoplasmic reticulum membrane. Its subcellular location is the phagosome membrane. It localises to the synapse. It is found in the synaptosome. Its function is as follows. Involved in the targeting and/or fusion of transport vesicles to their target membrane during transport of proteins from the early endosome to the lysosome. Required for heterotypic fusion of late endosomes with lysosomes and homotypic lysosomal fusion. Required for calcium regulated lysosomal exocytosis. Involved in the export of chylomicrons from the endoplasmic reticulum to the cis Golgi. Required for exocytosis of mediators during eosinophil and neutrophil degranulation, and target cell killing by natural killer cells. Required for focal exocytosis of late endocytic vesicles during phagosome formation. The polypeptide is Vesicle-associated membrane protein 7 (Vamp7) (Rattus norvegicus (Rat)).